Here is a 428-residue protein sequence, read N- to C-terminus: Phosphoribosylamine--glycine ligase (428 aa).

The ATP-grasp domain maps to 109–316; that stretch reads KDFLARHNIP…LVELCLAGTQ (208 aa). 135–196 contacts ATP; it reads VRQKGAPIVI…EEFLDGEEAS (62 aa). E286 and N288 together coordinate Mg(2+).

Belongs to the GARS family. The cofactor is Mg(2+). Mn(2+) serves as cofactor.

The catalysed reaction is 5-phospho-beta-D-ribosylamine + glycine + ATP = N(1)-(5-phospho-beta-D-ribosyl)glycinamide + ADP + phosphate + H(+). It participates in purine metabolism; IMP biosynthesis via de novo pathway; N(1)-(5-phospho-D-ribosyl)glycinamide from 5-phospho-alpha-D-ribose 1-diphosphate: step 2/2. The sequence is that of Phosphoribosylamine--glycine ligase from Yersinia pestis.